Here is a 442-residue protein sequence, read N- to C-terminus: Adenylosuccinate synthetase (442 aa).

Residues 25–31 (GDEGKGK), 53–55 (GHT), and Lys62 each bind GTP. The active-site Proton acceptor is Asp26. Residues Asp26 and Gly53 each coordinate Mg(2+). Residues 26-29 (DEGK) and 51-54 (NAGH) contribute to the IMP site. His54 acts as the Proton donor in catalysis. Positions 141, 155, 232, and 247 each coordinate IMP. Thr307 is a GTP binding site. Position 307 to 313 (307 to 313 (TTTKRPR)) interacts with substrate. Arg311 is an IMP binding site. Residues Arg313, 339–341 (KLD), and 425–427 (GVG) contribute to the GTP site.

This sequence belongs to the adenylosuccinate synthetase family. As to quaternary structure, homodimer. It depends on Mg(2+) as a cofactor.

It localises to the cytoplasm. The catalysed reaction is IMP + L-aspartate + GTP = N(6)-(1,2-dicarboxyethyl)-AMP + GDP + phosphate + 2 H(+). It participates in purine metabolism; AMP biosynthesis via de novo pathway; AMP from IMP: step 1/2. In terms of biological role, plays an important role in the salvage pathway for purine nucleotide biosynthesis. Catalyzes the first committed step in the biosynthesis of AMP from IMP. This Plasmodium falciparum (isolate 3D7) protein is Adenylosuccinate synthetase (Adss).